The sequence spans 207 residues: Urease accessory protein UreG (207 aa).

12-19 is a binding site for GTP; sequence GPVGAGKT.

It belongs to the SIMIBI class G3E GTPase family. UreG subfamily. Homodimer. UreD, UreF and UreG form a complex that acts as a GTP-hydrolysis-dependent molecular chaperone, activating the urease apoprotein by helping to assemble the nickel containing metallocenter of UreC. The UreE protein probably delivers the nickel.

Its subcellular location is the cytoplasm. Facilitates the functional incorporation of the urease nickel metallocenter. This process requires GTP hydrolysis, probably effectuated by UreG. This is Urease accessory protein UreG from Cereibacter sphaeroides (strain ATCC 17025 / ATH 2.4.3) (Rhodobacter sphaeroides).